Here is a 708-residue protein sequence, read N- to C-terminus: Exocyst complex component 5 (708 aa).

Residue Ala2 is modified to N-acetylalanine. Positions 40 to 101 (KRLLEEFVNH…AFQHFQELDE (62 aa)) form a coiled coil. Thr122, Thr395, and Thr405 each carry phosphothreonine. A Phosphoserine modification is found at Ser412.

This sequence belongs to the SEC10 family. The exocyst complex is composed of EXOC1, EXOC2, EXOC3, EXOC4, EXOC5, EXOC6, EXOC7 and EXOC8. Interacts with EXOC3L1. In terms of tissue distribution, ubiquitous.

Its subcellular location is the cytoplasm. The protein localises to the midbody. In terms of biological role, component of the exocyst complex involved in the docking of exocytic vesicles with fusion sites on the plasma membrane. This Rattus norvegicus (Rat) protein is Exocyst complex component 5 (Exoc5).